The following is a 211-amino-acid chain: Hypoxanthine-guanine phosphoribosyltransferase (211 aa).

A disordered region spans residues 1-20 (MSNSAKSPSGPVGDEGRRNY). GMP is bound by residues Lys-66, 125–133 (EDIVDSAIT), Lys-157, and Asp-185. Asp-129 acts as the Proton acceptor in catalysis. Asp-185 is a binding site for Mg(2+).

The protein belongs to the purine/pyrimidine phosphoribosyltransferase family. Mg(2+) is required as a cofactor.

It is found in the cytoplasm. It catalyses the reaction IMP + diphosphate = hypoxanthine + 5-phospho-alpha-D-ribose 1-diphosphate. It carries out the reaction GMP + diphosphate = guanine + 5-phospho-alpha-D-ribose 1-diphosphate. It participates in purine metabolism; IMP biosynthesis via salvage pathway; IMP from hypoxanthine: step 1/1. Converts guanine to guanosine monophosphate, and hypoxanthine to inosine monophosphate. Transfers the 5-phosphoribosyl group from 5-phosphoribosylpyrophosphate onto the purine. Plays a central role in the generation of purine nucleotides through the purine salvage pathway. This Leishmania donovani protein is Hypoxanthine-guanine phosphoribosyltransferase.